The sequence spans 298 residues: Zinc finger protein-like 1 homolog (298 aa).

The B box-type; degenerate zinc finger occupies 1–43 (MGLCKCPKRLVTNQFCFEHRVNVCEHCMVQSHPKCIVQSYLQW). Residues 53–101 (CTLCGTTLEQGDCVRLVCYHVFHWDCLNARQAALPANTAPRGHQCPACT) form an RING-type; atypical zinc finger. Residues 199-230 (AGDYASSRRPLLPRQSPIGGTDRDDNKYQRRT) are disordered. At Ser214 the chain carries Phosphoserine. The helical transmembrane segment at 255–275 (WFLVTAGILAFVLFVYLMAWL) threads the bilayer.

The protein belongs to the ZFPL1 family.

It is found in the membrane. This Drosophila erecta (Fruit fly) protein is Zinc finger protein-like 1 homolog.